Here is a 506-residue protein sequence, read N- to C-terminus: DEAD-box ATP-dependent RNA helicase CshA (506 aa).

The Q motif signature appears at Q2–K30. Positions I33–I203 constitute a Helicase ATP-binding domain. A46–T53 is an ATP binding site. Positions D150–D153 match the DEAD box motif. A Helicase C-terminal domain is found at Q214 to L375. The segment at E436 to K506 is disordered. Residues K468–T480 are compositionally biased toward basic residues.

The protein belongs to the DEAD box helicase family. CshA subfamily. As to quaternary structure, oligomerizes, may be a member of the RNA degradosome.

Its subcellular location is the cytoplasm. It carries out the reaction ATP + H2O = ADP + phosphate + H(+). DEAD-box RNA helicase possibly involved in RNA degradation. Unwinds dsRNA in both 5'- and 3'-directions, has RNA-dependent ATPase activity. This Staphylococcus aureus (strain MRSA252) protein is DEAD-box ATP-dependent RNA helicase CshA.